The chain runs to 154 residues: Cytochrome c-type biogenesis protein CcmE (154 aa).

Residues 1-8 (MTPQRKRR) lie on the Cytoplasmic side of the membrane. A helical; Signal-anchor for type II membrane protein transmembrane segment spans residues 9-29 (LVMLAALAGGVGVAVALALAA). The Periplasmic segment spans residues 30 to 154 (LQQNINLFYS…GGTPAAEPQP (125 aa)). Heme-binding residues include histidine 124 and tyrosine 128. Positions 130–154 (PPEAAHALKQGAATSGGTPAAEPQP) are disordered.

This sequence belongs to the CcmE/CycJ family.

Its subcellular location is the cell inner membrane. In terms of biological role, heme chaperone required for the biogenesis of c-type cytochromes. Transiently binds heme delivered by CcmC and transfers the heme to apo-cytochromes in a process facilitated by CcmF and CcmH. This chain is Cytochrome c-type biogenesis protein CcmE, found in Bordetella petrii (strain ATCC BAA-461 / DSM 12804 / CCUG 43448).